Here is a 287-residue protein sequence, read N- to C-terminus: Bifunctional protein FolD (287 aa).

NADP(+) contacts are provided by residues 166–168 and I232; that span reads GAS.

Belongs to the tetrahydrofolate dehydrogenase/cyclohydrolase family. In terms of assembly, homodimer.

The catalysed reaction is (6R)-5,10-methylene-5,6,7,8-tetrahydrofolate + NADP(+) = (6R)-5,10-methenyltetrahydrofolate + NADPH. It carries out the reaction (6R)-5,10-methenyltetrahydrofolate + H2O = (6R)-10-formyltetrahydrofolate + H(+). It functions in the pathway one-carbon metabolism; tetrahydrofolate interconversion. In terms of biological role, catalyzes the oxidation of 5,10-methylenetetrahydrofolate to 5,10-methenyltetrahydrofolate and then the hydrolysis of 5,10-methenyltetrahydrofolate to 10-formyltetrahydrofolate. This is Bifunctional protein FolD from Aeromonas salmonicida (strain A449).